A 162-amino-acid chain; its full sequence is ATP synthase subunit b (162 aa).

The helical transmembrane segment at 8–28 (LTGIIQLLNFLILLFVLYKFL) threads the bilayer.

This sequence belongs to the ATPase B chain family. In terms of assembly, F-type ATPases have 2 components, F(1) - the catalytic core - and F(0) - the membrane proton channel. F(1) has five subunits: alpha(3), beta(3), gamma(1), delta(1), epsilon(1). F(0) has three main subunits: a(1), b(2) and c(10-14). The alpha and beta chains form an alternating ring which encloses part of the gamma chain. F(1) is attached to F(0) by a central stalk formed by the gamma and epsilon chains, while a peripheral stalk is formed by the delta and b chains.

The protein resides in the cell inner membrane. Functionally, f(1)F(0) ATP synthase produces ATP from ADP in the presence of a proton or sodium gradient. F-type ATPases consist of two structural domains, F(1) containing the extramembraneous catalytic core and F(0) containing the membrane proton channel, linked together by a central stalk and a peripheral stalk. During catalysis, ATP synthesis in the catalytic domain of F(1) is coupled via a rotary mechanism of the central stalk subunits to proton translocation. In terms of biological role, component of the F(0) channel, it forms part of the peripheral stalk, linking F(1) to F(0). This chain is ATP synthase subunit b, found in Pseudothermotoga lettingae (strain ATCC BAA-301 / DSM 14385 / NBRC 107922 / TMO) (Thermotoga lettingae).